A 163-amino-acid polypeptide reads, in one-letter code: Endoribonuclease YbeY (163 aa).

Zn(2+) is bound by residues H121, H125, and H131.

The protein belongs to the endoribonuclease YbeY family. Zn(2+) is required as a cofactor.

The protein localises to the cytoplasm. In terms of biological role, single strand-specific metallo-endoribonuclease involved in late-stage 70S ribosome quality control and in maturation of the 3' terminus of the 16S rRNA. This chain is Endoribonuclease YbeY, found in Synechococcus sp. (strain JA-2-3B'a(2-13)) (Cyanobacteria bacterium Yellowstone B-Prime).